A 391-amino-acid chain; its full sequence is PPE family protein PPE15 (391 aa).

The tract at residues leucine 312–alanine 367 is eukaryotic-like SH3 domain.

It belongs to the mycobacterial PPE family. In terms of assembly, forms a heterodimer with PE8. The dimer forms a 1:1:1 heterotrimeric complex with EspG5. PPE15 interacts directly with EspG5. Interacts via the C-terminal region with host Toll-like receptor 4 (TLR4). Interacts, also via the C-terminal region, with two cytosolic subunits of the host NOX complex, p47phox (NCF1) and p67phox (NCF2).

The protein resides in the secreted. Its subcellular location is the host mitochondrion. May play a critical role in the homeostasis of triacylglycerol-containing lipid droplets in M.tuberculosis and influence the entry of the pathogen into a dormant state. Is recognized by host TLR4 receptor at the macrophage cell surface, which modulates the host immune response, induces mitochondrial stress and perturbations, and induces macrophage apoptosis leading to pathogen persistence. Also downregulates NOX-mediated reactive oxygen species (ROS) generation in THP1 macrophages, which increases intracellular survival of bacteria. PPE15 interacts with two subunits of the host NADPH oxidase (NOX) complex in the cytosol of macrophages and prevents their migration to the membrane, which inhibits the assembly of the NOX complex at the plasma membrane of THP1 macrophages. This leads to reduced NOX activity and diminished ROS generation. This chain is PPE family protein PPE15 (PPE15), found in Mycobacterium tuberculosis (strain CDC 1551 / Oshkosh).